Consider the following 88-residue polypeptide: UPF0297 protein Ccel_2240 (88 aa).

This sequence belongs to the UPF0297 family.

The protein is UPF0297 protein Ccel_2240 of Ruminiclostridium cellulolyticum (strain ATCC 35319 / DSM 5812 / JCM 6584 / H10) (Clostridium cellulolyticum).